A 566-amino-acid polypeptide reads, in one-letter code: MDVENLIITTLKDKVKGLTGNEMDIRLDEPPAINMGDYSTNISFRLAKDLKKAPKMIAEDIANSLSILGIERIEAVNGYINFFMNYSDFSKETVSKISDEKENFGKLEKRNEKVILEHTSANPNGPFHIGHGRNMVIGDSLKRILIASGYDVETQYYVNDMGRQEAIVVFGNEKFELDNSKKADHAIGEVYVETNKLLAENEELEQEILNLMKNYESACEAGIENELTEKFKNAVNYSLGGFKETLLTLNIYHDKFVWESEFVKSGMVREVINRLMNTGKVVEDEVYRLDLSDYGIEKKLVLARLNGTSLYSTRDIAYHITKMENCDFAVNLLGADHKLTAVMVNKTLALLGYNEAEVVFYEFISLPEGSMSTRKGRFISMDELFEEAKSRAAEEVRKRGVAQSEEEIEEIAKKIAVGAVRYNIVRIAPEKPMVFRWDEALDFEKVGCPVIQYAHARCSRILENVENISNENLFAYDMNENEKTIVKLLSKLPKIVEKAAEVRKPQIVANYVLDVAQGFNKFYANCPVLKEENETVKNSRLAIVSTTKTVLENTLDLLGIEMPGKM.

A 'HIGH' region motif is present at residues 121–131; sequence ANPNGPFHIGH.

The protein belongs to the class-I aminoacyl-tRNA synthetase family.

Its subcellular location is the cytoplasm. The catalysed reaction is tRNA(Arg) + L-arginine + ATP = L-arginyl-tRNA(Arg) + AMP + diphosphate. This Methanococcus maripaludis (strain DSM 14266 / JCM 13030 / NBRC 101832 / S2 / LL) protein is Arginine--tRNA ligase.